The primary structure comprises 893 residues: Serine/threonine-protein kinase PLK4 (893 aa).

One can recognise a Protein kinase domain in the interval 12–265 (FRVGNLLGKG…LSSVLDHPFM (254 aa)). ATP is bound by residues 18–26 (LGKGSFAGV) and K41. An N6-acetyllysine mark is found at K45 and K46. Catalysis depends on D136, which acts as the Proton acceptor. A compositionally biased stretch (polar residues) spans 349 to 358 (NQEQETSNSG). The tract at residues 349-393 (NQEQETSNSGRGRVIQEAEERPHSRYLRRAHSSDRSETSHGQSRV) is disordered. The segment covering 362–371 (VIQEAEERPH) has biased composition (basic and acidic residues). Phosphoserine is present on residues S403 and S588. Residues 509-622 (TLRSITSPLT…SRFVQLVRSK (114 aa)) form the Cryptic POLO box 1 (CPB1) domain. One can recognise a Cryptic POLO box 2 (CPB2) domain in the interval 623–736 (SPKITYFTRY…GRRPSSTSSP (114 aa)). Residues 730 to 749 (PSSTSSPKALTPPPPVDPNY) are disordered. The POLO box domain maps to 809-887 (QLLKSVFVKN…LSSILLMFSN (79 aa)).

It belongs to the protein kinase superfamily. Ser/Thr protein kinase family. CDC5/Polo subfamily. Homodimer. Interacts with CEP152 (via N-terminus). Interacts with CEP78; this interaction may be important for proper PLK4 localization to the centriole and PLK4-induced overduplication of centrioles. Interacts with CEP131. Interacts simultaneously with TENT5C and CEP192. Interacts with TENT5C; this interaction leads to the TENT5C recruitment in the centrosome. Interacts with CEP85; this interaction may be important in cell migration and centriole assembly. Post-translationally, ubiquitinated; leading to its degradation by the proteasome. In terms of processing, tyrosine-phosphorylated by TEC. Acetylation by KAT2A and KAT2B impairs kinase activity by shifting the kinase to an inactive conformation.

It is found in the cytoplasm. The protein localises to the cytoskeleton. Its subcellular location is the microtubule organizing center. It localises to the centrosome. The protein resides in the centriole. It is found in the nucleus. The protein localises to the nucleolus. Its subcellular location is the cleavage furrow. The catalysed reaction is L-seryl-[protein] + ATP = O-phospho-L-seryl-[protein] + ADP + H(+). The enzyme catalyses L-threonyl-[protein] + ATP = O-phospho-L-threonyl-[protein] + ADP + H(+). In terms of biological role, serine/threonine-protein kinase that plays a central role in centriole duplication. Able to trigger procentriole formation on the surface of the parental centriole cylinder, leading to the recruitment of centriole biogenesis proteins such as SASS6, CPAP, CCP110, CEP135 and gamma-tubulin. When overexpressed, it is able to induce centrosome amplification through the simultaneous generation of multiple procentrioles adjoining each parental centriole during S phase. Phosphorylates 'Ser-151' of FBXW5 during the G1/S transition, leading to inhibit FBXW5 ability to ubiquitinate SASS6. Its central role in centriole replication suggests a possible role in tumorigenesis, centrosome aberrations being frequently observed in tumors. Also involved in deuterosome-mediated centriole amplification in multiciliated that can generate more than 100 centrioles. Also involved in trophoblast differentiation by phosphorylating HAND1, leading to disrupt the interaction between HAND1 and MDFIC and activate HAND1. Phosphorylates CDC25C and CHEK2. Required for the recruitment of STIL to the centriole and for STIL-mediated centriole amplification. Phosphorylates CEP131 and PCM1 which is essential for proper organization and integrity of centriolar satellites. In Bos taurus (Bovine), this protein is Serine/threonine-protein kinase PLK4.